The following is a 159-amino-acid chain: MAGRPLPGGGGVCAAAYPNTSAGFPPHLQAGAMRRRFWGVFNCLCAGAFGALAAASAKLAFGREVNVGFCVLGIIMMATTNSLMWTFFSRGLSLSMSSAIASVTVTFSNILNSAFLGFVLYGECQEVLWWGGVFLILCGLTLIHRELPPPRKPLPHKQR.

Helical transmembrane passes span 37-57 (FWGV…AASA), 68-88 (GFCV…WTFF), 100-120 (IASV…GFVL), and 124-144 (CQEV…TLIH).

It is found in the membrane. The chain is Transmembrane protein 42 (TMEM42) from Bos taurus (Bovine).